The primary structure comprises 338 residues: 1-aminocyclopropane-1-carboxylate deaminase (338 aa).

N6-(pyridoxal phosphate)lysine is present on Lys51. Ser78 acts as the Nucleophile in catalysis.

Belongs to the ACC deaminase/D-cysteine desulfhydrase family. Homotrimer. Pyridoxal 5'-phosphate serves as cofactor.

It carries out the reaction 1-aminocyclopropane-1-carboxylate + H2O = 2-oxobutanoate + NH4(+). In terms of biological role, catalyzes a cyclopropane ring-opening reaction, the irreversible conversion of 1-aminocyclopropane-1-carboxylate (ACC) to ammonia and alpha-ketobutyrate. Allows growth on ACC as a nitrogen source. The polypeptide is 1-aminocyclopropane-1-carboxylate deaminase (Paracidovorax citrulli (strain AAC00-1) (Acidovorax citrulli)).